A 123-amino-acid chain; its full sequence is Small ribosomal subunit protein uS12cz/uS12cy (123 aa).

It belongs to the universal ribosomal protein uS12 family. Part of the 30S ribosomal subunit.

The protein resides in the plastid. It is found in the chloroplast. Functionally, with S4 and S5 plays an important role in translational accuracy. Located at the interface of the 30S and 50S subunits. The protein is Small ribosomal subunit protein uS12cz/uS12cy (rps12-A) of Populus alba (White poplar).